A 424-amino-acid chain; its full sequence is Phosphomethylpyrimidine synthase 2 (424 aa).

Substrate-binding positions include asparagine 65, methionine 94, tyrosine 123, histidine 162, 184-186, 225-228, and glutamate 264; these read SRG and DGLR. Histidine 268 provides a ligand contact to Zn(2+). Tyrosine 291 is a substrate binding site. Histidine 332 is a Zn(2+) binding site. Positions 408, 411, and 415 each coordinate [4Fe-4S] cluster.

Belongs to the ThiC family. [4Fe-4S] cluster serves as cofactor.

The enzyme catalyses 5-amino-1-(5-phospho-beta-D-ribosyl)imidazole + S-adenosyl-L-methionine = 4-amino-2-methyl-5-(phosphooxymethyl)pyrimidine + CO + 5'-deoxyadenosine + formate + L-methionine + 3 H(+). It functions in the pathway cofactor biosynthesis; thiamine diphosphate biosynthesis. In terms of biological role, catalyzes the synthesis of the hydroxymethylpyrimidine phosphate (HMP-P) moiety of thiamine from aminoimidazole ribotide (AIR) in a radical S-adenosyl-L-methionine (SAM)-dependent reaction. The protein is Phosphomethylpyrimidine synthase 2 of Methanothermobacter thermautotrophicus (strain ATCC 29096 / DSM 1053 / JCM 10044 / NBRC 100330 / Delta H) (Methanobacterium thermoautotrophicum).